Reading from the N-terminus, the 284-residue chain is Diaminopimelate epimerase (284 aa).

Positions 20, 53, and 73 each coordinate substrate. Cys-82 acts as the Proton donor in catalysis. Residues 83–84 (GN), Asn-167, Asn-200, and 218–219 (ER) contribute to the substrate site. Cys-227 acts as the Proton acceptor in catalysis. Residue 228–229 (GS) participates in substrate binding.

The protein belongs to the diaminopimelate epimerase family. In terms of assembly, homodimer.

It localises to the cytoplasm. The catalysed reaction is (2S,6S)-2,6-diaminopimelate = meso-2,6-diaminopimelate. It participates in amino-acid biosynthesis; L-lysine biosynthesis via DAP pathway; DL-2,6-diaminopimelate from LL-2,6-diaminopimelate: step 1/1. Catalyzes the stereoinversion of LL-2,6-diaminopimelate (L,L-DAP) to meso-diaminopimelate (meso-DAP), a precursor of L-lysine and an essential component of the bacterial peptidoglycan. This chain is Diaminopimelate epimerase, found in Xanthomonas euvesicatoria pv. vesicatoria (strain 85-10) (Xanthomonas campestris pv. vesicatoria).